The chain runs to 197 residues: Small ribosomal subunit protein uS4A (197 aa).

The S4 RNA-binding domain occupies 107 to 181; sequence RRLQTQVYKL…VARRNAARKA (75 aa). Residues 160-197 form a disordered region; the sequence is PTSPFGGARPGRVARRNAARKAEASGEAADEADEADEE. Lysine 180 is covalently cross-linked (Glycyl lysine isopeptide (Lys-Gly) (interchain with G-Cter in ubiquitin)). A Phosphoserine modification is found at serine 184. The segment covering 187–197 has biased composition (acidic residues); that stretch reads AADEADEADEE.

It belongs to the universal ribosomal protein uS4 family. In terms of assembly, component of the small ribosomal subunit (SSU). Mature yeast ribosomes consist of a small (40S) and a large (60S) subunit. The 40S small subunit contains 1 molecule of ribosomal RNA (18S rRNA) and 33 different proteins (encoded by 57 genes). The large 60S subunit contains 3 rRNA molecules (25S, 5.8S and 5S rRNA) and 46 different proteins (encoded by 81 genes). Interacts with snoRNA U3. uS11 interacts with MPP10. Component of the ribosomal small subunit (SSU) processome composed of at least 40 protein subunits and snoRNA U3.

Its subcellular location is the cytoplasm. It localises to the nucleus. The protein resides in the nucleolus. Its function is as follows. Component of the ribosome, a large ribonucleoprotein complex responsible for the synthesis of proteins in the cell. The small ribosomal subunit (SSU) binds messenger RNAs (mRNAs) and translates the encoded message by selecting cognate aminoacyl-transfer RNA (tRNA) molecules. The large subunit (LSU) contains the ribosomal catalytic site termed the peptidyl transferase center (PTC), which catalyzes the formation of peptide bonds, thereby polymerizing the amino acids delivered by tRNAs into a polypeptide chain. The nascent polypeptides leave the ribosome through a tunnel in the LSU and interact with protein factors that function in enzymatic processing, targeting, and the membrane insertion of nascent chains at the exit of the ribosomal tunnel. uS4 is involved in nucleolar processing of pre-18S ribosomal RNA and ribosome assembly. The sequence is that of Small ribosomal subunit protein uS4A from Saccharomyces cerevisiae (strain ATCC 204508 / S288c) (Baker's yeast).